The chain runs to 87 residues: Gibberellin-regulated protein 8 (87 aa).

The first 25 residues, 1–25 (MKLVVVQFFIISLLLTSSFSVLSSA), serve as a signal peptide directing secretion.

This sequence belongs to the GASA family. In terms of processing, six disulfide bonds may be present. In terms of tissue distribution, expressed in roots and developing seeds.

The protein resides in the secreted. Its function is as follows. Gibberellin-regulated protein that may function in hormonal controlled steps of development such as seed germination, flowering and seed maturation. This is Gibberellin-regulated protein 8 from Arabidopsis thaliana (Mouse-ear cress).